The sequence spans 566 residues: MOB kinase activator-like 2 (566 aa).

Disordered stretches follow at residues 28 to 57 and 74 to 118; these read ADAT…SSLS and GRAV…GAQA. Positions 35–57 are enriched in low complexity; sequence SSTAPQTPTASTPRPSSSHSSLS. The segment covering 85–115 has biased composition (gly residues); that stretch reads QNGGKGNASGAGGGAGGGGAGGASGGTGGTG. Zn(2+) is bound by residues cysteine 209, cysteine 214, histidine 289, and histidine 294. Disordered stretches follow at residues 346–407 and 498–541; these read GGCQ…SASA and FSNN…QCNA. The segment covering 367-388 has biased composition (low complexity); sequence LQHQSLQQQQQHHNSSSNSTSS. Residues 394–407 show a composition bias toward polar residues; the sequence is VNSQSNNGSTSASA. A compositionally biased stretch (low complexity) spans 498-507; sequence FSNNNNNNHN. The segment covering 508 to 526 has biased composition (basic residues); sequence LNHHHHHHHHHGHHGHHHA.

This sequence belongs to the MOB1/phocein family. In terms of assembly, interacts with and activates trc, also interacts with wts.

It localises to the cytoplasm. The protein localises to the nucleus. Functionally, required for the normal morphogenesis of a variety of polarized outgrowths including epidermal hairs, bristles, arista laterals, and dendrites. This Drosophila melanogaster (Fruit fly) protein is MOB kinase activator-like 2 (Mob2).